Here is a 264-residue protein sequence, read N- to C-terminus: 3-methyl-2-oxobutanoate hydroxymethyltransferase (264 aa).

2 residues coordinate Mg(2+): D43 and D82. 3-methyl-2-oxobutanoate contacts are provided by residues 43–44, D82, and K111; that span reads DS. E113 lines the Mg(2+) pocket. E180 functions as the Proton acceptor in the catalytic mechanism.

It belongs to the PanB family. Homodecamer; pentamer of dimers. It depends on Mg(2+) as a cofactor.

It is found in the cytoplasm. The enzyme catalyses 3-methyl-2-oxobutanoate + (6R)-5,10-methylene-5,6,7,8-tetrahydrofolate + H2O = 2-dehydropantoate + (6S)-5,6,7,8-tetrahydrofolate. It participates in cofactor biosynthesis; (R)-pantothenate biosynthesis; (R)-pantoate from 3-methyl-2-oxobutanoate: step 1/2. Its function is as follows. Catalyzes the reversible reaction in which hydroxymethyl group from 5,10-methylenetetrahydrofolate is transferred onto alpha-ketoisovalerate to form ketopantoate. The polypeptide is 3-methyl-2-oxobutanoate hydroxymethyltransferase (Campylobacter fetus subsp. fetus (strain 82-40)).